The chain runs to 790 residues: uncharacterized protein (790 aa).

A TBDR plug domain is found at 37–172 (APVPVPVNGN…NGGVIDAKIK (136 aa)). In terms of domain architecture, TBDR beta-barrel spans 178–790 (DSKVKLGYRT…TFWLDVSMKF (613 aa)).

Belongs to the TonB-dependent receptor family.

It localises to the cell outer membrane. This is an uncharacterized protein from Escherichia coli (strain K12).